The following is a 161-amino-acid chain: MSEISTALSLENCPCQSSHHYADCCGKFHLRQAFPETAEQLMRSRYTAYVLKNIPYIVVTTVPSQQTLLKPRLLQEWADNTTWLGLEILKTESLTKTQSAVEFKAIFQGEECEQAHQERSIFVKIEDRWYFVDPTVSLPTMKQPCVCGSGKKFKHCCGGFL.

Belongs to the UPF0225 family.

The polypeptide is UPF0225 protein HI_0277 (Haemophilus influenzae (strain ATCC 51907 / DSM 11121 / KW20 / Rd)).